Here is a 259-residue protein sequence, read N- to C-terminus: Archaerhodopsin-2 (259 aa).

The propeptide occupies 1-6 (MDPIAL). Gln-7 is modified (pyrrolidone carboxylic acid). Residues 7–18 (QAGFDLLNDGRP) lie on the Extracellular side of the membrane. The helical transmembrane segment at 19 to 40 (ETLWLGIGTLLMLIGTFYFIAR) threads the bilayer. The Cytoplasmic segment spans residues 41 to 49 (GWGVTDKEA). A helical membrane pass occupies residues 50–71 (REYYAITILVPGIASAAYLAMF). At 72–90 (FGIGVTEVELASGTVLDIY) the chain is on the extracellular side. Residues 91 to 112 (YARYADWLFTTPLLLLDLALLA) traverse the membrane as a helical segment. Residues 113-115 (KVD) are Cytoplasmic-facing. The chain crosses the membrane as a helical span at residues 116–138 (RVTIGTLIGVDALMIVTGLIGAL). Residues 139-142 (SKTP) lie on the Extracellular side of the membrane. Residues 143-171 (LARYTWWLFSTIAFLFVLYYLLTSLRSAA) traverse the membrane as a helical segment. Residues 172-174 (AKR) lie on the Cytoplasmic side of the membrane. The helical transmembrane segment at 175 to 203 (SEEVRSTFNTLTALVAVLWTAYPILWIVG) threads the bilayer. Residues 204–211 (TEGAGVVG) are Extracellular-facing. The helical transmembrane segment at 212-244 (LGIETLAFMVLDVTAKVGFGFVLLRSRAILGET) threads the bilayer. Lys-227 carries the N6-(retinylidene)lysine modification. Over 245–259 (EAPEPSAGADASAAD) the chain is Cytoplasmic.

The protein belongs to the archaeal/bacterial/fungal opsin family.

The protein resides in the cell membrane. Light-driven proton pump. It may interact with bacterioruberin in the claret membrane. The sequence is that of Archaerhodopsin-2 from Halobacterium sp. (strain aus-2).